The chain runs to 68 residues: DNA gyrase inhibitor YacG (68 aa).

Residues Cys12, Cys15, Cys30, and Cys34 each coordinate Zn(2+). The interval 48–68 (KLKTQDAPTSGKGQHSDDYED) is disordered.

Belongs to the DNA gyrase inhibitor YacG family. As to quaternary structure, interacts with GyrB. The cofactor is Zn(2+).

Its function is as follows. Inhibits all the catalytic activities of DNA gyrase by preventing its interaction with DNA. Acts by binding directly to the C-terminal domain of GyrB, which probably disrupts DNA binding by the gyrase. The chain is DNA gyrase inhibitor YacG from Acinetobacter baylyi (strain ATCC 33305 / BD413 / ADP1).